A 918-amino-acid polypeptide reads, in one-letter code: Importin subunit beta-2 (918 aa).

HEAT repeat units lie at residues 11 to 38, 43 to 92, 103 to 137, 145 to 181, 190 to 222, 235 to 263, 275 to 303, 320 to 413, 421 to 449, 461 to 488, 501 to 534, 542 to 577, 583 to 620, 628 to 678, 694 to 725, 777 to 814, 825 to 858, and 867 to 900; these read YVLQ…EAME, QPEF…GGNN, YVKS…TYYR, GLQM…FQLE, EALL…TVIP, FLEI…SFLL, DGIV…FLHA, KDIV…MTNI, IAFP…GAMA, PALI…TLSR, LIPV…IENA, LFYS…AEKC, AMQI…SSLG, PEVY…GLGA, ILKI…YFFN, IDMS…LTHP, DSNW…INLT, and DTIH…SAQI. The interval 361 to 395 is disordered; that stretch reads APRIVKKKEAGNGEDADDNEDDDDDDDDEDGDVDT. Over residues 372-393 the composition is skewed to acidic residues; the sequence is NGEDADDNEDDDDDDDDEDGDV.

The protein belongs to the importin beta family. Importin beta-2 subfamily. Interacts with Ran (GSP1); interacts specifically with the GTP-bound form of Ran (GTP-Ran), protecting it from GTP hydrolysis and nucleotide exchange. Interacts with nucleoporins NUP1, NUP100 and NUP116. Interacts with NAB2 and HRP1/NAB4; via their rg-NLS. Interacts with TFG2; via its PY-NLS.

The protein resides in the cytoplasm. It is found in the nucleus. Its subcellular location is the nuclear pore complex. Functions in nuclear protein import as nuclear transport receptor. Serves as receptor for arginine/glycine-rich nuclear localization signals (rg-NLS) and PY-NLS in cargo substrates. Its predominant cargo substrate seems to be mRNA-binding proteins. Required for nuclear transport of NAB2, HRP1/NAB4 and TFG2. Mediates docking of the importin/substrate complex to the nuclear pore complex (NPC) through binding to repeat-containing nucleoporins. The complex is subsequently translocated through the pore by an energy requiring, Ran-dependent mechanism. At the nucleoplasmic side of the NPC, GTP-Ran binding leads to release of the cargo. Efficient GTP-Ran-mediated substrate release requires RNA. The importin is re-exported from the nucleus to the cytoplasm where GTP hydrolysis releases Ran from importin. The directionality of nuclear import is thought to be conferred by an asymmetric distribution of the GTP- and GDP-bound forms of Ran between the cytoplasm and nucleus. The protein is Importin subunit beta-2 of Saccharomyces cerevisiae (strain ATCC 204508 / S288c) (Baker's yeast).